Consider the following 282-residue polypeptide: Glucuronoxylan 4-O-methyltransferase 1 (282 aa).

The helical transmembrane segment at 13–33 (VLLVFLLATLILIFIVRSTLT) threads the bilayer.

Belongs to the methyltransferase superfamily. As to expression, expressed in rosette leaves, stems, flowers and siliques.

It localises to the golgi apparatus membrane. The enzyme catalyses glucuronoxylan D-glucuronate + n S-adenosyl-L-methionine = glucuronoxylan 4-O-methyl-D-glucuronate + n S-adenosyl-L-homocysteine + n H(+). In terms of biological role, methyltransferase catalyzing 4-O-methylation of glucuronic acid side chains on xylan. The polypeptide is Glucuronoxylan 4-O-methyltransferase 1 (GXM1) (Arabidopsis thaliana (Mouse-ear cress)).